Reading from the N-terminus, the 357-residue chain is Phosphoribosylformylglycinamidine cyclo-ligase (357 aa).

The protein belongs to the AIR synthase family.

It is found in the cytoplasm. It catalyses the reaction 2-formamido-N(1)-(5-O-phospho-beta-D-ribosyl)acetamidine + ATP = 5-amino-1-(5-phospho-beta-D-ribosyl)imidazole + ADP + phosphate + H(+). Its pathway is purine metabolism; IMP biosynthesis via de novo pathway; 5-amino-1-(5-phospho-D-ribosyl)imidazole from N(2)-formyl-N(1)-(5-phospho-D-ribosyl)glycinamide: step 2/2. This chain is Phosphoribosylformylglycinamidine cyclo-ligase, found in Rhodopseudomonas palustris (strain ATCC BAA-98 / CGA009).